The primary structure comprises 63 residues: 2-hydroxymuconate tautomerase (63 aa).

P2 serves as the catalytic Proton acceptor; via imino nitrogen.

Belongs to the 4-oxalocrotonate tautomerase family. As to quaternary structure, homohexamer.

It carries out the reaction (2Z,4E)-2-hydroxyhexa-2,4-dienedioate = (3E)-2-oxohex-3-enedioate. The protein operates within xenobiotic degradation; toluene degradation. Its function is as follows. Catalyzes the ketonization of 2-hydroxymuconate stereoselectively to yield 2-oxo-3-hexenedioate. The polypeptide is 2-hydroxymuconate tautomerase (dmpI) (Pseudomonas sp. (strain CF600)).